Reading from the N-terminus, the 505-residue chain is MAWENVRVRVAPSPTGDPHVGTAYMALFNEIFAKRFNGKMILRIEDTDQTRSRDDYEKNIFSALKWCGIQWDEGPDIGGPYGPYRQSERTEIYREYAELLLKTDYAYKCFATPKELEEMRAVATTLGYRGGYDRRYRYLSPEEIEARTREGQPYTIRLKVPLTGECVLDDYCKGRVVFPWADVDDQVLIKSDGFPTYHFANVVDDHLMGITHVLRGEEWLSSTPKHLLLYEAFGWEAPTFLHMPLLLNPDGTKLSKRKNPTSIFYYRDAGYVKEAFMNFLTLMGYSMEGDEEIYSLEKLIANFDPRRIGKSGAVFDTRKLDWMNKHYLTHEKSSESLLAKLKDWLINDEFFLKILPLCQSRITTLAEFIGFTGFFFSVLPEYSKEELLPATIVEEKAAILLYSYVKYLEKADLWVKDQFYQGSKWLSSAFQVHHKKVVIPLLYVAITGKKQGLPLFDSMELLGKPRTRARLVHAQNLLGGVPKKIQTTIDKVLKEEDFENKIFEF.

Positions 12 to 22 (PSPTGDPHVGT) match the 'HIGH' region motif. Residues 253 to 257 (KLSKR) carry the 'KMSKS' region motif. Lys256 contributes to the ATP binding site.

The protein belongs to the class-I aminoacyl-tRNA synthetase family. Glutamate--tRNA ligase type 1 subfamily. Monomer.

Its subcellular location is the cytoplasm. The enzyme catalyses tRNA(Glu) + L-glutamate + ATP = L-glutamyl-tRNA(Glu) + AMP + diphosphate. Catalyzes the attachment of glutamate to tRNA(Glu) in a two-step reaction: glutamate is first activated by ATP to form Glu-AMP and then transferred to the acceptor end of tRNA(Glu). In Chlamydophila psittaci (strain ATCC VR-125 / 6BC) (Chlamydia psittaci), this protein is Glutamate--tRNA ligase.